The primary structure comprises 311 residues: MTSTPHHPDLRSQLETLTTEAFRPELAEIDQLPTLDIARLMNGEDATVPAAVAERLPEIAAAIDAVAVRMARGGRLIYAGAGTAGRLGVLDASECPPTFNTGPGQVVGLIAGGPDAMVTSIEGAEDSPELARADLDALALTADDTVVGVSASGRTPYAVGAVEYARSLGALTVGLACNRDSALAAAAEHGIEVVTGPELLTGSTRLKAGTAQKLVLNMLSTITMIRLGKTYGNLMVDVRASNEKLRARSRRIVALATGAADDDIERALTATDGEVKDAILVLLADVDGPTAARLLAESGGHLRAAMAAALG.

An SIS domain is found at V66 to K229. Residue E94 is the Proton donor of the active site. The active site involves E125.

This sequence belongs to the GCKR-like family. MurNAc-6-P etherase subfamily. Homodimer.

The enzyme catalyses N-acetyl-D-muramate 6-phosphate + H2O = N-acetyl-D-glucosamine 6-phosphate + (R)-lactate. The protein operates within amino-sugar metabolism; N-acetylmuramate degradation. Its function is as follows. Specifically catalyzes the cleavage of the D-lactyl ether substituent of MurNAc 6-phosphate, producing GlcNAc 6-phosphate and D-lactate. In Streptomyces coelicolor (strain ATCC BAA-471 / A3(2) / M145), this protein is N-acetylmuramic acid 6-phosphate etherase.